The primary structure comprises 326 residues: Protein GVP36 (326 aa).

Residue Ser2 is modified to N-acetylserine. Ser2 is subject to Phosphoserine. Glycyl lysine isopeptide (Lys-Gly) (interchain with G-Cter in ubiquitin) cross-links involve residues Lys13, Lys305, and Lys313. The disordered stretch occupies residues 299–326; the sequence is AEEPEAKPEVAEEEKPQTAISMNDEDDA. Positions 302-314 are enriched in basic and acidic residues; sequence PEAKPEVAEEEKP. Ser319 bears the Phosphoserine mark.

The protein resides in the golgi apparatus membrane. This is Protein GVP36 (GVP36) from Saccharomyces cerevisiae (strain ATCC 204508 / S288c) (Baker's yeast).